We begin with the raw amino-acid sequence, 406 residues long: Formate-dependent phosphoribosylglycinamide formyltransferase (406 aa).

N(1)-(5-phospho-beta-D-ribosyl)glycinamide-binding positions include 27–28 and E87; that span reads EL. ATP contacts are provided by residues R120, K162, 167–172, 202–205, and E210; these read SSGKGQ and EGFI. One can recognise an ATP-grasp domain in the interval 125 to 320; sequence RLAAETLGLP…EFELHARALL (196 aa). Mg(2+) is bound by residues E279 and E291. N(1)-(5-phospho-beta-D-ribosyl)glycinamide-binding positions include D298, K367, and 374–375; that span reads RR.

The protein belongs to the PurK/PurT family. As to quaternary structure, homodimer.

The enzyme catalyses N(1)-(5-phospho-beta-D-ribosyl)glycinamide + formate + ATP = N(2)-formyl-N(1)-(5-phospho-beta-D-ribosyl)glycinamide + ADP + phosphate + H(+). The protein operates within purine metabolism; IMP biosynthesis via de novo pathway; N(2)-formyl-N(1)-(5-phospho-D-ribosyl)glycinamide from N(1)-(5-phospho-D-ribosyl)glycinamide (formate route): step 1/1. Involved in the de novo purine biosynthesis. Catalyzes the transfer of formate to 5-phospho-ribosyl-glycinamide (GAR), producing 5-phospho-ribosyl-N-formylglycinamide (FGAR). Formate is provided by PurU via hydrolysis of 10-formyl-tetrahydrofolate. The protein is Formate-dependent phosphoribosylglycinamide formyltransferase of Bordetella parapertussis (strain 12822 / ATCC BAA-587 / NCTC 13253).